The chain runs to 416 residues: Doublesex- and mab-3-related transcription factor A2 (416 aa).

Positions 25-72 (CARCRNHGVVSALKGHKRYCRWKDCMCAKCTLIAERQRVMAAQVALRR) form a DNA-binding region, DM. Over residues 131 to 154 (FSKGQLSGPTTPQQAAGKSASAES) the composition is skewed to polar residues. The segment at 131-226 (FSKGQLSGPT…PSPSSAASRH (96 aa)) is disordered. Over residues 197–207 (GSVSSIGSDSG) the composition is skewed to low complexity. The DMA domain occupies 227-262 (MNAIDILTRVFPSHKRSILELVLQGCGKDVVQAIEQ).

Belongs to the DMRT family.

It localises to the nucleus. In terms of biological role, may be involved in sexual development. The polypeptide is Doublesex- and mab-3-related transcription factor A2 (dmrta2) (Takifugu rubripes (Japanese pufferfish)).